A 684-amino-acid chain; its full sequence is Homoaconitase, mitochondrial (684 aa).

[4Fe-4S] cluster-binding residues include cysteine 337, cysteine 397, and cysteine 400.

Belongs to the aconitase/IPM isomerase family. The cofactor is [4Fe-4S] cluster.

It is found in the mitochondrion. It carries out the reaction (2R,3S)-homoisocitrate = cis-homoaconitate + H2O. Its pathway is amino-acid biosynthesis; L-lysine biosynthesis via AAA pathway; L-alpha-aminoadipate from 2-oxoglutarate: step 3/5. Catalyzes the reversible hydration of cis-homoaconitate to (2R,3S)-homoisocitrate, a step in the alpha-aminoadipate pathway for lysine biosynthesis. The protein is Homoaconitase, mitochondrial (LYS4) of Candida albicans (strain SC5314 / ATCC MYA-2876) (Yeast).